The chain runs to 702 residues: Vertnin (702 aa).

Positions 562–625 are disordered; that stretch reads VPTLGKGGQE…QGQPHSGPLL (64 aa). Residues 570–582 are compositionally biased toward basic and acidic residues; sequence QEAEEKQEKEAGR.

Belongs to the vertnin family.

The protein localises to the nucleus. Acts as a transcription factor that regulates development of thoracic vertebrae. This Homo sapiens (Human) protein is Vertnin.